Here is an 871-residue protein sequence, read N- to C-terminus: DNA mismatch repair protein MutS (871 aa).

630–637 (GPNMGGKS) lines the ATP pocket. A disordered region spans residues 830-849 (KEEPESKSASPVEAALAGIN).

Belongs to the DNA mismatch repair MutS family.

Its function is as follows. This protein is involved in the repair of mismatches in DNA. It is possible that it carries out the mismatch recognition step. This protein has a weak ATPase activity. The chain is DNA mismatch repair protein MutS from Verminephrobacter eiseniae (strain EF01-2).